Here is a 179-residue protein sequence, read N- to C-terminus: Guanosine-3',5'-bis(diphosphate) 3'-pyrophosphohydrolase MESH1 (179 aa).

The region spanning 32-127 (YINHPLGVAR…VKLADKLYNL (96 aa)) is the HD domain. 3 residues coordinate Mn(2+): His-35, His-61, and Asp-62. Active-site nucleophile residues include Glu-65 and Asp-66. Position 122 (Asp-122) interacts with Mn(2+).

Belongs to the MESH1 family. The cofactor is Mn(2+).

The catalysed reaction is guanosine 3',5'-bis(diphosphate) + H2O = GDP + diphosphate + H(+). Functionally, ppGpp hydrolyzing enzyme involved in starvation response. This chain is Guanosine-3',5'-bis(diphosphate) 3'-pyrophosphohydrolase MESH1 (hddc3), found in Xenopus tropicalis (Western clawed frog).